A 495-amino-acid chain; its full sequence is Glutamyl-tRNA(Gln) amidotransferase subunit A (495 aa).

Residues Lys-78 and Ser-158 each act as charge relay system in the active site. Catalysis depends on Ser-182, which acts as the Acyl-ester intermediate.

Belongs to the amidase family. GatA subfamily. Heterotrimer of A, B and C subunits.

It catalyses the reaction L-glutamyl-tRNA(Gln) + L-glutamine + ATP + H2O = L-glutaminyl-tRNA(Gln) + L-glutamate + ADP + phosphate + H(+). Allows the formation of correctly charged Gln-tRNA(Gln) through the transamidation of misacylated Glu-tRNA(Gln) in organisms which lack glutaminyl-tRNA synthetase. The reaction takes place in the presence of glutamine and ATP through an activated gamma-phospho-Glu-tRNA(Gln). This chain is Glutamyl-tRNA(Gln) amidotransferase subunit A, found in Roseobacter denitrificans (strain ATCC 33942 / OCh 114) (Erythrobacter sp. (strain OCh 114)).